A 731-amino-acid chain; its full sequence is E3 ubiquitin-protein ligase SMURF1 (731 aa).

Positions 1–120 (MSNPGTRRNG…TGYQRLDLCK (120 aa)) constitute a C2 domain. Serine 200 carries the post-translational modification Phosphoserine. A disordered region spans residues 216 to 237 (EVRGPLQTPQNRPHGHQSPELP). WW domains lie at 234 to 267 (PELPEGYEQRTTVQGQVYFLHTQTGVSTWHDPRI) and 280 to 313 (GPLPPGWEVRSTVSGRIYFVDHNNRTTQFTDPRL). Residues lysine 355 and lysine 357 each participate in a glycyl lysine isopeptide (Lys-Gly) (interchain with G-Cter in ubiquitin) cross-link. The HECT domain maps to 394 to 731 (RPKDLKKRLM…VEETCGFAVE (338 aa)). The Glycyl thioester intermediate role is filled by cysteine 699.

Interacts with TRAF4. Interacts (via HECT domain) with FBXL15 (via LRR repeats). Interacts with SMAD7 and TGFBR1; SMAD7 recruits SMURF1 to TGFBR1 and regulates TGF-beta receptor degradation. Interacts with MAVS; the interaction is mediated by NDFIP1. In terms of processing, auto-ubiquitinated in presence of NDFIP1. Ubiquitinated by the SCF(FBXL15) complex at Lys-355 and Lys-357, leading to its degradation by the proteasome. Lys-357 is the primary ubiquitination site.

It localises to the cytoplasm. Its subcellular location is the cell membrane. It catalyses the reaction S-ubiquitinyl-[E2 ubiquitin-conjugating enzyme]-L-cysteine + [acceptor protein]-L-lysine = [E2 ubiquitin-conjugating enzyme]-L-cysteine + N(6)-ubiquitinyl-[acceptor protein]-L-lysine.. Its pathway is protein modification; protein ubiquitination. Its function is as follows. E3 ubiquitin-protein ligase that acts as a negative regulator of BMP signaling pathway. Mediates ubiquitination and degradation of SMAD1 and SMAD5, 2 receptor-regulated SMADs specific for the BMP pathway. Promotes ubiquitination and subsequent proteasomal degradation of TRAF family members and RHOA. Promotes ubiquitination and subsequent proteasomal degradation of MAVS. Acts as an antagonist of TGF-beta signaling by ubiquitinating TGFBR1 and targeting it for degradation. Plays a role in dendrite formation by melanocytes. In Mus musculus (Mouse), this protein is E3 ubiquitin-protein ligase SMURF1 (Smurf1).